Reading from the N-terminus, the 230-residue chain is Large ribosomal subunit protein uL1 (230 aa).

The protein belongs to the universal ribosomal protein uL1 family. Part of the 50S ribosomal subunit.

In terms of biological role, binds directly to 23S rRNA. The L1 stalk is quite mobile in the ribosome, and is involved in E site tRNA release. Protein L1 is also a translational repressor protein, it controls the translation of the L11 operon by binding to its mRNA. The polypeptide is Large ribosomal subunit protein uL1 (Acholeplasma laidlawii (strain PG-8A)).